The sequence spans 302 residues: Oxygen-dependent coproporphyrinogen-III oxidase (302 aa).

Serine 94 is a binding site for substrate. Residues histidine 98 and histidine 108 each coordinate a divalent metal cation. Histidine 108 acts as the Proton donor in catalysis. Asparagine 110–arginine 112 serves as a coordination point for substrate. A divalent metal cation contacts are provided by histidine 147 and histidine 177. An important for dimerization region spans residues tyrosine 242–aspartate 277. A substrate-binding site is contributed by glycine 260–arginine 262.

Belongs to the aerobic coproporphyrinogen-III oxidase family. Homodimer. A divalent metal cation is required as a cofactor.

The protein localises to the cytoplasm. The catalysed reaction is coproporphyrinogen III + O2 + 2 H(+) = protoporphyrinogen IX + 2 CO2 + 2 H2O. It participates in porphyrin-containing compound metabolism; protoporphyrin-IX biosynthesis; protoporphyrinogen-IX from coproporphyrinogen-III (O2 route): step 1/1. In terms of biological role, involved in the heme biosynthesis. Catalyzes the aerobic oxidative decarboxylation of propionate groups of rings A and B of coproporphyrinogen-III to yield the vinyl groups in protoporphyrinogen-IX. The protein is Oxygen-dependent coproporphyrinogen-III oxidase of Alcanivorax borkumensis (strain ATCC 700651 / DSM 11573 / NCIMB 13689 / SK2).